The primary structure comprises 388 residues: Succinate--CoA ligase [ADP-forming] subunit beta (388 aa).

In terms of domain architecture, ATP-grasp spans 9–244 (KKLFAEYGLP…PSQDDPREAH (236 aa)). Residues Lys-46, 53–55 (GRG), Glu-99, Thr-102, and Glu-107 each bind ATP. Asn-199 and Asp-213 together coordinate Mg(2+). Residues Asn-264 and 321–323 (GIV) contribute to the substrate site.

The protein belongs to the succinate/malate CoA ligase beta subunit family. Heterotetramer of two alpha and two beta subunits. It depends on Mg(2+) as a cofactor.

It carries out the reaction succinate + ATP + CoA = succinyl-CoA + ADP + phosphate. The enzyme catalyses GTP + succinate + CoA = succinyl-CoA + GDP + phosphate. It functions in the pathway carbohydrate metabolism; tricarboxylic acid cycle; succinate from succinyl-CoA (ligase route): step 1/1. Its function is as follows. Succinyl-CoA synthetase functions in the citric acid cycle (TCA), coupling the hydrolysis of succinyl-CoA to the synthesis of either ATP or GTP and thus represents the only step of substrate-level phosphorylation in the TCA. The beta subunit provides nucleotide specificity of the enzyme and binds the substrate succinate, while the binding sites for coenzyme A and phosphate are found in the alpha subunit. This chain is Succinate--CoA ligase [ADP-forming] subunit beta, found in Aeromonas salmonicida (strain A449).